Consider the following 154-residue polypeptide: OCIA domain-containing protein 2 (154 aa).

Positions 1–120 (MASVSTHGNQ…HSFEDQLRGA (120 aa)) constitute an OCIA domain. The residue at position 41 (lysine 41) is an N6-acetyllysine.

In terms of assembly, interacts (via OCIA domain) with OCIAD1/ASRIJ and STAT3. As to expression, abundant in kidney, liver and brain.

The protein localises to the endosome. Its subcellular location is the mitochondrion. The protein resides in the mitochondrion inner membrane. In terms of biological role, has an essential role in the assembly of mitochondrial respiratory chain complex III. Is also required for STAT3 activation and plays a role in cell migration. The sequence is that of OCIA domain-containing protein 2 (Ociad2) from Mus musculus (Mouse).